The following is a 643-amino-acid chain: Protein disulfide-isomerase A4 (643 aa).

A signal peptide spans methionine 1–alanine 20. Thioredoxin domains follow at residues alanine 21–glutamine 167 and glutamine 167–lysine 299. A disordered region spans residues alanine 24 to glutamate 58. Residues serine 32 to valine 56 are compositionally biased toward acidic residues. Residues cysteine 89–cysteine 92 carry the CXXC motif. 2 cysteine pairs are disulfide-bonded: cysteine 89/cysteine 92 and cysteine 204/cysteine 207. Residue lysine 364 is modified to N6-acetyllysine. Positions phenylalanine 503–threonine 634 constitute a Thioredoxin 3 domain. The CXXC signature appears at cysteine 553 to cysteine 556. Cysteines 553 and 556 form a disulfide. Positions lysine 640 to leucine 643 match the Prevents secretion from ER motif.

This sequence belongs to the protein disulfide isomerase family. As to quaternary structure, part of a large chaperone multiprotein complex comprising DNAJB11, HSP90B1, HSPA5, HYOU, PDIA2, PDIA4, PDIA6, PPIB, SDF2L1, UGGT1 and very small amounts of ERP29, but not, or at very low levels, CALR nor CANX. Component of a complex containing at least CRELD2, MANF, MATN3 and PDIA4. O-glycosylated.

It is found in the endoplasmic reticulum lumen. The protein localises to the melanosome. It catalyses the reaction Catalyzes the rearrangement of -S-S- bonds in proteins.. In Rattus norvegicus (Rat), this protein is Protein disulfide-isomerase A4 (Pdia4).